Consider the following 83-residue polypeptide: Small ribosomal subunit protein bS16 (83 aa).

It belongs to the bacterial ribosomal protein bS16 family.

The protein is Small ribosomal subunit protein bS16 of Cupriavidus taiwanensis (strain DSM 17343 / BCRC 17206 / CCUG 44338 / CIP 107171 / LMG 19424 / R1) (Ralstonia taiwanensis (strain LMG 19424)).